Consider the following 1115-residue polypeptide: Phytochrome E (1115 aa).

Positions 213–383 (DIGTLCDTVV…AFSLQLYMEL (171 aa)) constitute a GAF domain. Cys-318 serves as a coordination point for phytochromobilin. The PAS 1 domain maps to 598–669 (MALELVRLVE…ALMCRALQGE (72 aa)). In terms of domain architecture, PAC spans 672 to 728 (RNVEVKLLKFGNHPTKEVVYLVVNACTSRDYKNDIIGVCFVGQDITPEKAVMDKFVR). Positions 732–803 (DYEAIIQSLN…DALTKFMILL (72 aa)) constitute a PAS 2 domain. In terms of domain architecture, Histidine kinase spans 880 to 1100 (YIQQQMKNPL…YFLIDLDFKT (221 aa)).

It belongs to the phytochrome family. In terms of assembly, homodimer. Contains one covalently linked phytochromobilin chromophore.

Its function is as follows. Regulatory photoreceptor which exists in two forms that are reversibly interconvertible by light: the Pr form that absorbs maximally in the red region of the spectrum and the Pfr form that absorbs maximally in the far-red region. Photoconversion of Pr to Pfr induces an array of morphogenic responses, whereas reconversion of Pfr to Pr cancels the induction of those responses. Pfr controls the expression of a number of nuclear genes including those encoding the small subunit of ribulose-bisphosphate carboxylase, chlorophyll A/B binding protein, protochlorophyllide reductase, rRNA, etc. It also controls the expression of its own gene(s) in a negative feedback fashion. This Ipomoea nil (Japanese morning glory) protein is Phytochrome E (PHYE).